A 73-amino-acid chain; its full sequence is uncharacterized protein (73 aa).

This is an uncharacterized protein from Haemophilus influenzae (strain ATCC 51907 / DSM 11121 / KW20 / Rd).